A 428-amino-acid chain; its full sequence is MTRSHDLFKAAQRHIPGGVNSPVRAFKGVGGDPVFIQRAEGAYMYDADGKRYIDYVGSWGPMIAGHAHPEVVEAVREAARGGLSFGAPTEIEIRMAERVCELVPSMDMVRMVSSGTEATMSAIRLARGFTGRDKIIKFEGCYHGHGDSLLVKAGSGALTLGVPSSPGVPAALAEHTLTLTYNDLDEVRETLAHVGGQVACIIVEPVAGNMNCIPPVPGFLEGLRELCDEYGALLIFDEVMTGFRVALGGAQAHYGVKPDLTTLGKIIGGGMPVGAFGGRREVMEQLAPLGPVYQAGTLSGNPVAMAAGLKTLEIISRPGFYDELTRKTRVMVDGVLTAAGEAGIPMTANQVGGMFGLFFSEQPVTNFYQATQCDLDRFRLFFHEMLERGVYLAPSAYEAGFVSSAHSEADLAETIEAAARSLREVSGN.

Lys-265 carries the post-translational modification N6-(pyridoxal phosphate)lysine.

It belongs to the class-III pyridoxal-phosphate-dependent aminotransferase family. HemL subfamily. Homodimer. Pyridoxal 5'-phosphate is required as a cofactor.

It is found in the cytoplasm. It catalyses the reaction (S)-4-amino-5-oxopentanoate = 5-aminolevulinate. It participates in porphyrin-containing compound metabolism; protoporphyrin-IX biosynthesis; 5-aminolevulinate from L-glutamyl-tRNA(Glu): step 2/2. The sequence is that of Glutamate-1-semialdehyde 2,1-aminomutase from Thioalkalivibrio sulfidiphilus (strain HL-EbGR7).